A 925-amino-acid chain; its full sequence is Translation initiation factor IF-2 (925 aa).

The segment at 190 to 329 (PAAPTSEAAP…RRRDEREAAV (140 aa)) is disordered. Composition is skewed to pro residues over residues 199-209 (PPEPEPTPLPA), 217-238 (PVRP…PAPR), and 279-288 (RPVPAQPAPQ). The segment covering 289–307 (TPTRSGSGIAKKGAITKAG) has biased composition (low complexity). Over residues 320–329 (RRRDEREAAV) the composition is skewed to basic and acidic residues. Positions 417 to 589 (VRPPVVTIMG…LLLVADYELE (173 aa)) constitute a tr-type G domain. A G1 region spans residues 426-433 (GHVDHGKT). 426-433 (GHVDHGKT) lines the GTP pocket. Residues 451 to 455 (GITQH) form a G2 region. A G3 region spans residues 476 to 479 (DTPG). GTP is bound by residues 476–480 (DTPGH) and 530–533 (NKVD). Positions 530–533 (NKVD) are G4. Residues 566–568 (SAK) are G5.

This sequence belongs to the TRAFAC class translation factor GTPase superfamily. Classic translation factor GTPase family. IF-2 subfamily.

The protein resides in the cytoplasm. One of the essential components for the initiation of protein synthesis. Protects formylmethionyl-tRNA from spontaneous hydrolysis and promotes its binding to the 30S ribosomal subunits. Also involved in the hydrolysis of GTP during the formation of the 70S ribosomal complex. The polypeptide is Translation initiation factor IF-2 (Gloeobacter violaceus (strain ATCC 29082 / PCC 7421)).